The chain runs to 1241 residues: uncharacterized protein (1241 aa).

Residues 21–49 (ILNDNVREINIAKKEIKQLREYVGILQQN) are a coiled coil. Transmembrane regions (helical) follow at residues 261–281 (VNAIITGLLSRMMMVTNFVLG), 918–938 (AVVGMFFPIIGASIEVLGLVA), and 947–967 (GHIVNGSLELTLAGVATVIGG). The disordered stretch occupies residues 1005–1028 (THIGKEDSNNGVSTSTNKRSIGKA). Residues 1013–1028 (NNGVSTSTNKRSIGKA) are compositionally biased toward polar residues.

The protein resides in the host membrane. This is an uncharacterized protein from Diadromus pulchellus (Parasitic wasp).